The following is a 141-amino-acid chain: Subtilase cytotoxin subunit B (141 aa).

The first 23 residues, methionine 1–alanine 23, serve as a signal peptide directing secretion. N-glycoloyl-alpha-neuraminate is bound by residues methionine 33–serine 35 and glutamine 59. The interval tyrosine 89–glycine 94 is hydrophobic patch important for binding to SubA. Position 101 (tyrosine 101) interacts with N-glycoloyl-alpha-neuraminate.

In terms of assembly, forms a complex with SubA with the stoichiometry SubA1:SubB5 (called SubAB5). Each SubB subunit makes different contacts with the single SubA subunit. This subunit alone forms pentamers.

The protein resides in the secreted. The protein localises to the host cytoplasm. It localises to the host cytosol. It is found in the host endoplasmic reticulum lumen. In terms of biological role, receptor-binding subunit of subtilase cytotoxin SubAB5. Required for receptor-binding and thus correct trafficking in the host cell. Has specificity for host glycans terminating in the sialic acid N-glycolyl-alpha-neuraminic acid (Neu5Gc); each subunit in the SubB pentamer binds one Neu5Gc. The protease subunit (SubA) cleaves host BiP/HSPA5, inducing the host endoplasmic reticulum stress response and eventual cell death. Culture supernatant of E.coli expressing both subA and subB are toxic for Vero cells (African green monkey kidney cell line), Chinese hamster ovary cells and Hct-8 cells (human colonic epithelial cell line); the subunits are not toxic individually. Purified SubAB5 is highly toxic, &lt;0.1 pg is able to kill at least 50% of 30'000 Vero cells in a microtiter plate assay after 3 days; no cytotoxicity is seen at 24 hours. Preabsorption with cells expressing a ganglioside GM2 mimic reduced cytotoxicity of SubAB5 by 93% in the Vero cytotoxicity assay. Intraperitoneal injection of 200 ng of purified SubAB5 kills mice; the higher the dose the faster the mice die. Animals injected with purified SubAB5 have microvascular thrombi in the brain and other organs, including the renal tubules and glomeruli. Mice fed E.coli cells expressing cloned SubAB5 experience drastic weight loss and appear ill and lethargic. SubB alone at 2.5 ug/ml causes vacuolation of Vero cells, which requires the V-type ATPase proton pump; treated cells die. Protein synthesis in Vero cells is transiently inhibited by SubAB5; both subunits are required for this effect. Inhibition of protein synthesis is prevented by brefeldin A; cells are arrested in the G1 phase. SubAB5 at 100 ng/ml induced caspase-dependent apoptosis in Vero cells through mitochondrial membrane damage. This is Subtilase cytotoxin subunit B from Escherichia coli.